The chain runs to 301 residues: Protoheme IX farnesyltransferase (301 aa).

9 helical membrane passes run 16-36 (VVALIVFTALVGMFLAIPGIP), 41-61 (IQSGALGFLGIWLAAAAAAAI), 93-113 (VFAGVLITLSMTILTLGVNLI), 114-134 (TAVLTFTSLIGYAVIYTVYLK), 141-161 (IVIGGLAGAMPPMLGWAAVTG), 172-192 (SLLVAIIFVWTPPHFWALAIF), 217-237 (QILLYTVILSVVTLLPVATGM), 238-258 (SGVFYLGAALVLDAVFLWYAW), and 273-293 (FGYSIVYLMALFAFLMFDHWL).

Belongs to the UbiA prenyltransferase family. Protoheme IX farnesyltransferase subfamily.

Its subcellular location is the cell inner membrane. It carries out the reaction heme b + (2E,6E)-farnesyl diphosphate + H2O = Fe(II)-heme o + diphosphate. The protein operates within porphyrin-containing compound metabolism; heme O biosynthesis; heme O from protoheme: step 1/1. In terms of biological role, converts heme B (protoheme IX) to heme O by substitution of the vinyl group on carbon 2 of heme B porphyrin ring with a hydroxyethyl farnesyl side group. The protein is Protoheme IX farnesyltransferase of Xylella fastidiosa (strain 9a5c).